Here is a 31-residue protein sequence, read N- to C-terminus: Branched-chain-amino-acid aminotransferase, mitochondrial (31 aa).

Residues 1 to 27 constitute a mitochondrion transit peptide; the sequence is MAAAALRQIWARKFLPVPWLLCGPRRY.

It belongs to the class-IV pyridoxal-phosphate-dependent aminotransferase family. In terms of assembly, homodimer. Requires pyridoxal 5'-phosphate as cofactor.

The protein localises to the mitochondrion. The catalysed reaction is L-leucine + 2-oxoglutarate = 4-methyl-2-oxopentanoate + L-glutamate. It carries out the reaction L-isoleucine + 2-oxoglutarate = (S)-3-methyl-2-oxopentanoate + L-glutamate. The enzyme catalyses L-valine + 2-oxoglutarate = 3-methyl-2-oxobutanoate + L-glutamate. Its function is as follows. Catalyzes the first reaction in the catabolism of the essential branched chain amino acids leucine, isoleucine, and valine. May also function as a transporter of branched chain alpha-keto acids. In Sus scrofa (Pig), this protein is Branched-chain-amino-acid aminotransferase, mitochondrial (BCAT2).